We begin with the raw amino-acid sequence, 407 residues long: Peptidase T (407 aa).

Histidine 82 contacts Zn(2+). Residue aspartate 84 is part of the active site. Aspartate 143 provides a ligand contact to Zn(2+). The active-site Proton acceptor is glutamate 177. Glutamate 178, aspartate 200, and histidine 382 together coordinate Zn(2+).

It belongs to the peptidase M20B family. It depends on Zn(2+) as a cofactor.

The protein localises to the cytoplasm. The enzyme catalyses Release of the N-terminal residue from a tripeptide.. In terms of biological role, cleaves the N-terminal amino acid of tripeptides. This chain is Peptidase T, found in Streptococcus pyogenes serotype M2 (strain MGAS10270).